A 94-amino-acid polypeptide reads, in one-letter code: Phosphoribosyl-ATP pyrophosphatase (94 aa).

The protein belongs to the PRA-PH family.

It localises to the cytoplasm. The enzyme catalyses 1-(5-phospho-beta-D-ribosyl)-ATP + H2O = 1-(5-phospho-beta-D-ribosyl)-5'-AMP + diphosphate + H(+). It functions in the pathway amino-acid biosynthesis; L-histidine biosynthesis; L-histidine from 5-phospho-alpha-D-ribose 1-diphosphate: step 2/9. The chain is Phosphoribosyl-ATP pyrophosphatase (hisE) from Sulfurisphaera tokodaii (strain DSM 16993 / JCM 10545 / NBRC 100140 / 7) (Sulfolobus tokodaii).